Here is a 132-residue protein sequence, read N- to C-terminus: Small ribosomal subunit protein uS8 (132 aa).

This sequence belongs to the universal ribosomal protein uS8 family. Part of the 30S ribosomal subunit. Contacts proteins S5 and S12.

Functionally, one of the primary rRNA binding proteins, it binds directly to 16S rRNA central domain where it helps coordinate assembly of the platform of the 30S subunit. The chain is Small ribosomal subunit protein uS8 from Pseudarthrobacter chlorophenolicus (strain ATCC 700700 / DSM 12829 / CIP 107037 / JCM 12360 / KCTC 9906 / NCIMB 13794 / A6) (Arthrobacter chlorophenolicus).